We begin with the raw amino-acid sequence, 312 residues long: Beta-ketoacyl-[acyl-carrier-protein] synthase III (312 aa).

Residues Cys-112 and His-237 contribute to the active site. The ACP-binding stretch occupies residues 238–242 (QANIR). Asn-267 is an active-site residue.

Belongs to the thiolase-like superfamily. FabH family. In terms of assembly, homodimer.

It is found in the cytoplasm. It carries out the reaction (2S)-2-methylbutanoyl-CoA + malonyl-[ACP] + H(+) = (4S)-4-methyl-3-oxohexanoyl-[ACP] + CO2 + CoA. The catalysed reaction is 2-methylpropanoyl-CoA + malonyl-[ACP] + H(+) = 4-methyl-3-oxopentanoyl-[ACP] + CO2 + CoA. The enzyme catalyses 3-methylbutanoyl-CoA + malonyl-[ACP] + H(+) = 5-methyl-3-oxohexanoyl-[ACP] + CO2 + CoA. It catalyses the reaction malonyl-[ACP] + acetyl-CoA + H(+) = 3-oxobutanoyl-[ACP] + CO2 + CoA. It participates in lipid metabolism; fatty acid biosynthesis. In terms of biological role, catalyzes the condensation reaction of fatty acid synthesis by the addition to an acyl acceptor of two carbons from malonyl-ACP. Catalyzes the first condensation reaction which initiates fatty acid synthesis and may therefore play a role in governing the total rate of fatty acid production. Possesses both acetoacetyl-ACP synthase and acetyl transacylase activities. Can use branched-chain acyl-CoAs, with a preference for 2-methylbutanoyl-CoA, the precursor of odd-numbered anteiso fatty acids, at 30 degrees Celsius, which is further increased at a low temperature. Shows weak activity with acetyl-CoA. In Listeria monocytogenes serotype 1/2a (strain 10403S), this protein is Beta-ketoacyl-[acyl-carrier-protein] synthase III.